The sequence spans 358 residues: Heme A synthase (358 aa).

A run of 8 helical transmembrane segments spans residues 22 to 42 (IQVWLYSILLLCLAIVLVGGA), 107 to 127 (VLGRLVGLVALLGLIWFWATK), 133 to 153 (ILFPLIVVPILIAFQGFIGWW), 172 to 192 (LAFHLITACLVIIFVTYLSRG), 208 to 228 (FAAWLVILVLIEIYLGALVAG), 269 to 289 (FIHRFFAYFLFIVSALHAFYV), 302 to 322 (AFLIFFIIIIQAILGILTLLH), and 324 to 344 (VPISLGLIHQSMALVVLCFAV). His-271 contributes to the heme binding site. Residue His-332 participates in heme binding.

This sequence belongs to the COX15/CtaA family. Type 2 subfamily. Interacts with CtaB. Heme b serves as cofactor.

It is found in the cell membrane. It carries out the reaction Fe(II)-heme o + 2 A + H2O = Fe(II)-heme a + 2 AH2. Its pathway is porphyrin-containing compound metabolism; heme A biosynthesis; heme A from heme O: step 1/1. Its function is as follows. Catalyzes the conversion of heme O to heme A by two successive hydroxylations of the methyl group at C8. The first hydroxylation forms heme I, the second hydroxylation results in an unstable dihydroxymethyl group, which spontaneously dehydrates, resulting in the formyl group of heme A. The chain is Heme A synthase from Bartonella tribocorum (strain CIP 105476 / IBS 506).